Reading from the N-terminus, the 404-residue chain is Probable tRNA sulfurtransferase (404 aa).

The region spanning 61-166 (EAVSERLKDV…SGYSYIMCDE (106 aa)) is the THUMP domain. ATP contacts are provided by residues 184–185 (LL), 209–210 (HF), Arg266, Gly288, and Gln297.

The protein belongs to the ThiI family.

Its subcellular location is the cytoplasm. It catalyses the reaction [ThiI sulfur-carrier protein]-S-sulfanyl-L-cysteine + a uridine in tRNA + 2 reduced [2Fe-2S]-[ferredoxin] + ATP + H(+) = [ThiI sulfur-carrier protein]-L-cysteine + a 4-thiouridine in tRNA + 2 oxidized [2Fe-2S]-[ferredoxin] + AMP + diphosphate. It carries out the reaction [ThiS sulfur-carrier protein]-C-terminal Gly-Gly-AMP + S-sulfanyl-L-cysteinyl-[cysteine desulfurase] + AH2 = [ThiS sulfur-carrier protein]-C-terminal-Gly-aminoethanethioate + L-cysteinyl-[cysteine desulfurase] + A + AMP + 2 H(+). It participates in cofactor biosynthesis; thiamine diphosphate biosynthesis. In terms of biological role, catalyzes the ATP-dependent transfer of a sulfur to tRNA to produce 4-thiouridine in position 8 of tRNAs, which functions as a near-UV photosensor. Also catalyzes the transfer of sulfur to the sulfur carrier protein ThiS, forming ThiS-thiocarboxylate. This is a step in the synthesis of thiazole, in the thiamine biosynthesis pathway. The sulfur is donated as persulfide by IscS. The protein is Probable tRNA sulfurtransferase of Bacillus cereus (strain B4264).